The following is a 481-amino-acid chain: Proline--tRNA ligase (481 aa).

Belongs to the class-II aminoacyl-tRNA synthetase family. ProS type 3 subfamily. Homodimer.

The protein localises to the cytoplasm. It catalyses the reaction tRNA(Pro) + L-proline + ATP = L-prolyl-tRNA(Pro) + AMP + diphosphate. Catalyzes the attachment of proline to tRNA(Pro) in a two-step reaction: proline is first activated by ATP to form Pro-AMP and then transferred to the acceptor end of tRNA(Pro). This Chloroherpeton thalassium (strain ATCC 35110 / GB-78) protein is Proline--tRNA ligase.